Reading from the N-terminus, the 315-residue chain is Small ribosomal subunit biogenesis GTPase RsgA (315 aa).

Residues 82–246 enclose the CP-type G domain; the sequence is DQFKSKVLAA…LIDSPGFQEF (165 aa). GTP is bound by residues 130–133 and 184–192; these read NKID and GQSGMGKSS. Cys-270, Cys-275, His-277, and Cys-283 together coordinate Zn(2+).

This sequence belongs to the TRAFAC class YlqF/YawG GTPase family. RsgA subfamily. Monomer. Associates with 30S ribosomal subunit, binds 16S rRNA. The cofactor is Zn(2+).

The protein localises to the cytoplasm. One of several proteins that assist in the late maturation steps of the functional core of the 30S ribosomal subunit. Helps release RbfA from mature subunits. May play a role in the assembly of ribosomal proteins into the subunit. Circularly permuted GTPase that catalyzes slow GTP hydrolysis, GTPase activity is stimulated by the 30S ribosomal subunit. This Ralstonia pickettii (strain 12J) protein is Small ribosomal subunit biogenesis GTPase RsgA.